A 358-amino-acid polypeptide reads, in one-letter code: Methionine aminopeptidase 2 (358 aa).

His109 contacts substrate. 3 residues coordinate a divalent metal cation: Asp130, Asp141, and His210. His218 contributes to the substrate binding site. The a divalent metal cation site is built by Glu243 and Glu339.

Belongs to the peptidase M24A family. Methionine aminopeptidase eukaryotic type 2 subfamily. Co(2+) is required as a cofactor. It depends on Zn(2+) as a cofactor. Requires Mn(2+) as cofactor. Fe(2+) serves as cofactor.

The protein resides in the cytoplasm. The enzyme catalyses Release of N-terminal amino acids, preferentially methionine, from peptides and arylamides.. Its activity is regulated as follows. Irreversibly inhibited by the fungal metabolite fumagillin and the fumagillin analog TNP470, antiangiogenic drugs. Functionally, cotranslationally removes the N-terminal methionine from nascent proteins. The N-terminal methionine is often cleaved when the second residue in the primary sequence is small and uncharged (Met-Ala-, Cys, Gly, Pro, Ser, Thr, or Val). This is Methionine aminopeptidase 2 from Encephalitozoon hellem (strain ATCC 50504) (Microsporidian parasite).